We begin with the raw amino-acid sequence, 119 residues long: Flagellar transcriptional regulator FlhD (119 aa).

This sequence belongs to the FlhD family. In terms of assembly, homodimer; disulfide-linked. Forms a heterohexamer composed of two FlhC and four FlhD subunits. Each FlhC binds a FlhD dimer, forming a heterotrimer, and a hexamer assembles by dimerization of two heterotrimers.

The protein resides in the cytoplasm. Functions in complex with FlhC as a master transcriptional regulator that regulates transcription of several flagellar and non-flagellar operons by binding to their promoter region. Activates expression of class 2 flagellar genes, including fliA, which is a flagellum-specific sigma factor that turns on the class 3 genes. Also regulates genes whose products function in a variety of physiological pathways. The protein is Flagellar transcriptional regulator FlhD of Shigella dysenteriae serotype 1 (strain Sd197).